Here is a 31-residue protein sequence, read N- to C-terminus: Cliotide T11 (31 aa).

The cyclopeptide (Gly-Asn) cross-link spans 1–31; sequence GIPCGESCVFIPCTITALLGCSCKDKVCYKN. Intrachain disulfides connect cysteine 4-cysteine 21, cysteine 8-cysteine 23, and cysteine 13-cysteine 28.

Post-translationally, contains 3 disulfide bonds. This is a cyclic peptide. In terms of tissue distribution, expressed in seed but not in root, nodule, flower, stem, shoot, leaf and pod (at protein level).

In terms of biological role, probably participates in a plant defense mechanism. The sequence is that of Cliotide T11 from Clitoria ternatea (Butterfly pea).